The sequence spans 537 residues: Protein swallow (537 aa).

Residues 344-406 (QPNAGKPKKN…SESSHPSSND (63 aa)) are disordered. Composition is skewed to low complexity over residues 371–383 (NGNG…HSSS) and 392–406 (AAPN…SSND).

May be constituted of a homo- or heterodimer.

The protein localises to the nucleus. Has a role in localizing bicoid mRNA at the anterior margin of the oocyte during oogenesis, and a poorly characterized role in nuclear divisions in early embryogenesis. This is Protein swallow (swa) from Drosophila pseudoobscura pseudoobscura (Fruit fly).